Here is a 375-residue protein sequence, read N- to C-terminus: Protein arginine N-methyltransferase 6 (375 aa).

The interval 1 to 38 (MSQPKKRKLESGGGGEGGEGTEEEDGAEREAALERPRR) is disordered. T21 bears the Phosphothreonine mark. Residues 28–38 (EREAALERPRR) are compositionally biased toward basic and acidic residues. An asymmetric dimethylarginine; by autocatalysis mark is found at R29, R35, and R37. The 331-residue stretch at 44–374 (DQLYYECYSD…EEKTKDFAME (331 aa)) folds into the SAM-dependent MTase PRMT-type domain. Residues H57, R66, G90, E112, and E141 each contribute to the S-adenosyl-L-methionine site. Residues E155 and E164 contribute to the active site.

The protein belongs to the class I-like SAM-binding methyltransferase superfamily. Protein arginine N-methyltransferase family. PRMT6 subfamily. As to quaternary structure, interacts with EPB41L3 and NCOA1. In terms of assembly, (Microbial infection) Interacts with (and methylates) HIV-1 Tat, Rev and Nucleocapsid protein p7 (NC). (Microbial infection) Interacts with human cytomegalovirus protein UL69. In terms of processing, automethylation enhances its stability and antiretroviral activity. Highly expressed in kidney and testis.

It localises to the nucleus. It catalyses the reaction L-arginyl-[protein] + 2 S-adenosyl-L-methionine = N(omega),N(omega)-dimethyl-L-arginyl-[protein] + 2 S-adenosyl-L-homocysteine + 2 H(+). In terms of biological role, arginine methyltransferase that can catalyze the formation of both omega-N monomethylarginine (MMA) and asymmetrical dimethylarginine (aDMA), with a strong preference for the formation of aDMA. Preferentially methylates arginyl residues present in a glycine and arginine-rich domain and displays preference for monomethylated substrates. Specifically mediates the asymmetric dimethylation of histone H3 'Arg-2' to form H3R2me2a. H3R2me2a represents a specific tag for epigenetic transcriptional repression and is mutually exclusive with methylation on histone H3 'Lys-4' (H3K4me2 and H3K4me3). Acts as a transcriptional repressor of various genes such as HOXA2, THBS1 and TP53. Repression of TP53 blocks cellular senescence. Also methylates histone H2A and H4 'Arg-3' (H2AR3me and H4R3me, respectively). Acts as a regulator of DNA base excision during DNA repair by mediating the methylation of DNA polymerase beta (POLB), leading to the stimulation of its polymerase activity by enhancing DNA binding and processivity. Methylates HMGA1. Regulates alternative splicing events. Acts as a transcriptional coactivator of a number of steroid hormone receptors including ESR1, ESR2, PGR and NR3C1. Promotes fasting-induced transcriptional activation of the gluconeogenic program through methylation of the CRTC2 transcription coactivator. May play a role in innate immunity against HIV-1 in case of infection by methylating and impairing the function of various HIV-1 proteins such as Tat, Rev and Nucleocapsid protein p7 (NC). Methylates GPS2, protecting GPS2 from ubiquitination and degradation. Methylates SIRT7, inhibiting SIRT7 histone deacetylase activity and promoting mitochondria biogenesis. This Homo sapiens (Human) protein is Protein arginine N-methyltransferase 6 (PRMT6).